The following is a 582-amino-acid chain: DnaJ protein ERDJ3A (582 aa).

The first 25 residues, 1–25 (MGIPVRSLLVASIVLSSIALHVAAA), serve as a signal peptide directing secretion. In terms of domain architecture, J spans 29–93 (DPYKVLGVDK…EKRKNYDLYG (65 aa)). The N-linked (GlcNAc...) asparagine glycan is linked to Asn-61. The segment at 178 to 201 (GGSQHTGSAGKARRGTKSSGHDSS) is disordered. A coiled-coil region spans residues 407–437 (VKDLRSGIKELKNLLENFEKKNKKLASNQAK).

As to quaternary structure, interacts with BIP5.

It is found in the endoplasmic reticulum. The protein localises to the vacuole. May play a role in protein folding in the endoplasmic reticulum. The sequence is that of DnaJ protein ERDJ3A from Oryza sativa subsp. japonica (Rice).